The chain runs to 424 residues: MGNITKRGSKGRAADGPKALEGSTAATLHVQLCEAIMRQDCAALRALLRSHPVNQPMTILTSSTGCSLANSRLFLSQETLSFLPIHLAAKYRKAQSLLCLLEHGADPEARDTQGFTTLHLMLLNWPITSTTWTKPRNKIQTMLTDVQRNAVLCLRILCAHGAQVNARVDSGHRHCPLHLATIYGTHLVLSILAQNGAQVNAQNGSSMTPLHMAADILNKEMMQTLIAWGASVNCAVSSTGNTALKLAVSTASSKAGRLLAAGLGCIRLLLVHGAQVNARDHDGQAAIHEACFGGREVIINLLLEFEANVNILTRNGESPIHMYLQRGSNIRDTALLARLLFRSYPLRLTNNQGKLPAGILLPEFHLLRETLLKLSQKPLSLEDICKRNVRNIYGEKHKQLLKRLLPGKIWNSVYGYHDLAHLLK.

ANK repeat units lie at residues 80 to 109 (LSFL…DPEA), 113 to 169 (QGFT…ARVD), 172 to 201 (HRHC…QVNA), 205 to 234 (SSMT…SVNC), 239 to 278 (TGNT…QVNA), 282 to 311 (DGQA…NVNI), and 315 to 348 (NGES…PLRL).

The chain is Ankyrin repeat domain-containing protein 61 (ANKRD61) from Bos taurus (Bovine).